We begin with the raw amino-acid sequence, 434 residues long: UDP-N-acetylmuramoylalanine--D-glutamate ligase (434 aa).

113–119 (GSNGKST) is an ATP binding site.

Belongs to the MurCDEF family.

The protein resides in the cytoplasm. The enzyme catalyses UDP-N-acetyl-alpha-D-muramoyl-L-alanine + D-glutamate + ATP = UDP-N-acetyl-alpha-D-muramoyl-L-alanyl-D-glutamate + ADP + phosphate + H(+). The protein operates within cell wall biogenesis; peptidoglycan biosynthesis. Functionally, cell wall formation. Catalyzes the addition of glutamate to the nucleotide precursor UDP-N-acetylmuramoyl-L-alanine (UMA). This Pasteurella multocida (strain Pm70) protein is UDP-N-acetylmuramoylalanine--D-glutamate ligase.